Here is a 516-residue protein sequence, read N- to C-terminus: Thiosulfate sulfurtransferase/rhodanese-like domain-containing protein 2 (516 aa).

Phosphoserine is present on Ser-269. The Rhodanese domain occupies 301 to 396; the sequence is EQSDTILLDC…YLEEFPDGFY (96 aa). Residue Cys-355 is the Cysteine persulfide intermediate of the active site. The tract at residues 490–516 is disordered; it reads RELLQHVRQPVSPEPGPDAEEDGPVLV. Residues 506-516 are compositionally biased toward acidic residues; that stretch reads PDAEEDGPVLV.

The protein is Thiosulfate sulfurtransferase/rhodanese-like domain-containing protein 2 (TSTD2) of Pongo abelii (Sumatran orangutan).